We begin with the raw amino-acid sequence, 113 residues long: Nucleoid-associated protein sync_0026 (113 aa).

This sequence belongs to the YbaB/EbfC family. As to quaternary structure, homodimer.

Its subcellular location is the cytoplasm. It localises to the nucleoid. Binds to DNA and alters its conformation. May be involved in regulation of gene expression, nucleoid organization and DNA protection. The sequence is that of Nucleoid-associated protein sync_0026 from Synechococcus sp. (strain CC9311).